A 358-amino-acid polypeptide reads, in one-letter code: Magnesium-protoporphyrin IX monomethyl ester [oxidative] cyclase (358 aa).

This sequence belongs to the AcsF family. Fe cation is required as a cofactor.

The enzyme catalyses Mg-protoporphyrin IX 13-monomethyl ester + 3 NADPH + 3 O2 + 2 H(+) = 3,8-divinyl protochlorophyllide a + 3 NADP(+) + 5 H2O. It functions in the pathway porphyrin-containing compound metabolism; chlorophyll biosynthesis (light-independent). Its function is as follows. Catalyzes the formation of the isocyclic ring in chlorophyll biosynthesis. Mediates the cyclase reaction, which results in the formation of divinylprotochlorophyllide (Pchlide) characteristic of all chlorophylls from magnesium-protoporphyrin IX 13-monomethyl ester (MgPMME). The sequence is that of Magnesium-protoporphyrin IX monomethyl ester [oxidative] cyclase from Trichodesmium erythraeum (strain IMS101).